We begin with the raw amino-acid sequence, 276 residues long: Insulin-like growth factor-binding protein 2-A (276 aa).

A signal peptide spans 1–22 (MLSYVSCGLLLALVTFHGTARS). The IGFBP N-terminal domain maps to 24–105 (MVFRCPSCTA…VQGLGRCGRK (82 aa)). Intrachain disulfides connect cysteine 28-cysteine 55, cysteine 31-cysteine 57, cysteine 39-cysteine 58, cysteine 46-cysteine 61, cysteine 69-cysteine 82, cysteine 76-cysteine 102, cysteine 180-cysteine 214, cysteine 225-cysteine 236, and cysteine 238-cysteine 259. Residues 177-259 (QSQCQQELDQ…SPLIRGDPNC (83 aa)) form the Thyroglobulin type-1 domain. The Cell attachment site signature appears at 254 to 256 (RGD).

In terms of assembly, interacts equally well with igf1 and igf2. In embryos at 24 hpf, initially expressed in the lens and cranial region, and at 48 and 72 hpf in the brain boundary vasculature. Expression in these regions persists throughout the hatching period and by 96 hpf expression is most abundant in the liver. In both male and female adults, highest expression is in the liver with modest expression in the brain. In male but not females adults, expressed at a low level in muscle and gonad. Also expressed in the adult intestine.

The protein resides in the secreted. In terms of biological role, IGF-binding proteins prolong the half-life of the IGFs and have been shown to either inhibit or stimulate the growth promoting effects of the IGFs on cell culture. They alter the interaction of IGFs with their cell surface receptors. This Danio rerio (Zebrafish) protein is Insulin-like growth factor-binding protein 2-A (igfbp2a).